Consider the following 458-residue polypeptide: Exodeoxyribonuclease 7 large subunit (458 aa).

It belongs to the XseA family. As to quaternary structure, heterooligomer composed of large and small subunits.

The protein localises to the cytoplasm. It carries out the reaction Exonucleolytic cleavage in either 5'- to 3'- or 3'- to 5'-direction to yield nucleoside 5'-phosphates.. In terms of biological role, bidirectionally degrades single-stranded DNA into large acid-insoluble oligonucleotides, which are then degraded further into small acid-soluble oligonucleotides. This Escherichia coli O6:H1 (strain CFT073 / ATCC 700928 / UPEC) protein is Exodeoxyribonuclease 7 large subunit.